A 980-amino-acid polypeptide reads, in one-letter code: Peroxisomal ATPase PEX6 (980 aa).

Arg-119 carries the omega-N-methylarginine modification. Residues 470-477 (GPPGCGKT) and 744-751 (GPPGTGKT) each bind ATP.

Belongs to the AAA ATPase family. Interacts with PEX1; forming the PEX1-PEX6 AAA ATPase complex, which is composed of a heterohexamer formed by a trimer of PEX1-PEX6 dimers. Interacts with PEX26; interaction is direct and promotes recruitment to peroxisomal membranes. Interacts with ZFAND6. Expressed in the retina, at higher levels in the photoreceptor layer at the joint between the outer and inner segments.

Its subcellular location is the cytoplasm. It is found in the cytosol. The protein localises to the peroxisome membrane. It localises to the cell projection. The protein resides in the cilium. Its subcellular location is the photoreceptor outer segment. It catalyses the reaction ATP + H2O = ADP + phosphate + H(+). Its function is as follows. Component of the PEX1-PEX6 AAA ATPase complex, a protein dislocase complex that mediates the ATP-dependent extraction of the PEX5 receptor from peroxisomal membranes, an essential step for PEX5 recycling. Specifically recognizes PEX5 monoubiquitinated at 'Cys-11', and pulls it out of the peroxisome lumen through the PEX2-PEX10-PEX12 retrotranslocation channel. Extraction by the PEX1-PEX6 AAA ATPase complex is accompanied by unfolding of the TPR repeats and release of bound cargo from PEX5. The sequence is that of Peroxisomal ATPase PEX6 from Homo sapiens (Human).